Reading from the N-terminus, the 422-residue chain is uncharacterized protein (422 aa).

The interval 1-22 (MIQNNPKSIGSSSNKSARSSGS) is disordered. The span at 7–22 (KSIGSSSNKSARSSGS) shows a compositional bias: low complexity.

This is an uncharacterized protein from Acanthamoeba polyphaga mimivirus (APMV).